The primary structure comprises 186 residues: ATP synthase subunit b, chloroplastic (186 aa).

A helical transmembrane segment spans residues 27–43; that stretch reads IFETNILNLAVVLGILL.

This sequence belongs to the ATPase B chain family. F-type ATPases have 2 components, F(1) - the catalytic core - and F(0) - the membrane proton channel. F(1) has five subunits: alpha(3), beta(3), gamma(1), delta(1), epsilon(1). F(0) has four main subunits: a(1), b(1), b'(1) and c(10-14). The alpha and beta chains form an alternating ring which encloses part of the gamma chain. F(1) is attached to F(0) by a central stalk formed by the gamma and epsilon chains, while a peripheral stalk is formed by the delta, b and b' chains.

The protein localises to the plastid. The protein resides in the chloroplast thylakoid membrane. In terms of biological role, f(1)F(0) ATP synthase produces ATP from ADP in the presence of a proton or sodium gradient. F-type ATPases consist of two structural domains, F(1) containing the extramembraneous catalytic core and F(0) containing the membrane proton channel, linked together by a central stalk and a peripheral stalk. During catalysis, ATP synthesis in the catalytic domain of F(1) is coupled via a rotary mechanism of the central stalk subunits to proton translocation. Functionally, component of the F(0) channel, it forms part of the peripheral stalk, linking F(1) to F(0). The polypeptide is ATP synthase subunit b, chloroplastic (Mesostigma viride (Green alga)).